A 113-amino-acid polypeptide reads, in one-letter code: Large ribosomal subunit protein uL22 (113 aa).

This sequence belongs to the universal ribosomal protein uL22 family. As to quaternary structure, part of the 50S ribosomal subunit.

Functionally, this protein binds specifically to 23S rRNA; its binding is stimulated by other ribosomal proteins, e.g. L4, L17, and L20. It is important during the early stages of 50S assembly. It makes multiple contacts with different domains of the 23S rRNA in the assembled 50S subunit and ribosome. In terms of biological role, the globular domain of the protein is located near the polypeptide exit tunnel on the outside of the subunit, while an extended beta-hairpin is found that lines the wall of the exit tunnel in the center of the 70S ribosome. This Halothermothrix orenii (strain H 168 / OCM 544 / DSM 9562) protein is Large ribosomal subunit protein uL22.